Here is a 221-residue protein sequence, read N- to C-terminus: uncharacterized protein (221 aa).

Positions M1–V189 constitute a Peptidase S8 domain.

The protein belongs to the peptidase S8 family.

This is an uncharacterized protein from Aquifex aeolicus (strain VF5).